Reading from the N-terminus, the 476-residue chain is Aspartyl/glutamyl-tRNA(Asn/Gln) amidotransferase subunit B (476 aa).

The protein belongs to the GatB/GatE family. GatB subfamily. Heterotrimer of A, B and C subunits.

The enzyme catalyses L-glutamyl-tRNA(Gln) + L-glutamine + ATP + H2O = L-glutaminyl-tRNA(Gln) + L-glutamate + ADP + phosphate + H(+). It catalyses the reaction L-aspartyl-tRNA(Asn) + L-glutamine + ATP + H2O = L-asparaginyl-tRNA(Asn) + L-glutamate + ADP + phosphate + 2 H(+). Its function is as follows. Allows the formation of correctly charged Asn-tRNA(Asn) or Gln-tRNA(Gln) through the transamidation of misacylated Asp-tRNA(Asn) or Glu-tRNA(Gln) in organisms which lack either or both of asparaginyl-tRNA or glutaminyl-tRNA synthetases. The reaction takes place in the presence of glutamine and ATP through an activated phospho-Asp-tRNA(Asn) or phospho-Glu-tRNA(Gln). The protein is Aspartyl/glutamyl-tRNA(Asn/Gln) amidotransferase subunit B of Oleidesulfovibrio alaskensis (strain ATCC BAA-1058 / DSM 17464 / G20) (Desulfovibrio alaskensis).